Consider the following 433-residue polypeptide: Apolipoprotein L5 (433 aa).

The interval 346-433 is disordered; sequence HHRHLPQKAS…GRQAPGRHRQ (88 aa). Residues 359–371 show a composition bias toward low complexity; that stretch reads SSSRGRAVRGSRV. Over residues 422 to 433 the composition is skewed to basic residues; that stretch reads RKGRQAPGRHRQ.

The protein belongs to the apolipoprotein L family. In terms of tissue distribution, low level of expression; detected in uterus, testis, skeletal muscle and stomach.

Its subcellular location is the cytoplasm. Functionally, may affect the movement of lipids in the cytoplasm or allow the binding of lipids to organelles. This Homo sapiens (Human) protein is Apolipoprotein L5 (APOL5).